Reading from the N-terminus, the 103-residue chain is Pyrimidine/purine nucleoside phosphorylase (103 aa).

It belongs to the nucleoside phosphorylase PpnP family.

The catalysed reaction is a purine D-ribonucleoside + phosphate = a purine nucleobase + alpha-D-ribose 1-phosphate. The enzyme catalyses adenosine + phosphate = alpha-D-ribose 1-phosphate + adenine. It carries out the reaction cytidine + phosphate = cytosine + alpha-D-ribose 1-phosphate. It catalyses the reaction guanosine + phosphate = alpha-D-ribose 1-phosphate + guanine. The catalysed reaction is inosine + phosphate = alpha-D-ribose 1-phosphate + hypoxanthine. The enzyme catalyses thymidine + phosphate = 2-deoxy-alpha-D-ribose 1-phosphate + thymine. It carries out the reaction uridine + phosphate = alpha-D-ribose 1-phosphate + uracil. It catalyses the reaction xanthosine + phosphate = alpha-D-ribose 1-phosphate + xanthine. In terms of biological role, catalyzes the phosphorolysis of diverse nucleosides, yielding D-ribose 1-phosphate and the respective free bases. Can use uridine, adenosine, guanosine, cytidine, thymidine, inosine and xanthosine as substrates. Also catalyzes the reverse reactions. The sequence is that of Pyrimidine/purine nucleoside phosphorylase from Shewanella oneidensis (strain ATCC 700550 / JCM 31522 / CIP 106686 / LMG 19005 / NCIMB 14063 / MR-1).